A 423-amino-acid polypeptide reads, in one-letter code: O-methyltransferase aoiF (423 aa).

An S-adenosyl-L-methionine-binding site is contributed by D273. H324 acts as the Proton acceptor in catalysis.

The protein belongs to the class I-like SAM-binding methyltransferase superfamily. Cation-independent O-methyltransferase family.

The protein operates within secondary metabolite biosynthesis. Functionally, O-methyltransferase; part of the gene cluster that mediates the biosynthesis of a methylated derivative of known natural products orthosporin and diaporthin. Within the pathway, aoiF catalyzes the biotransformation of orthosporin to diaporthin but also of diaporthin to the final product, by performing a tandem methylation of the polyketide core. Orthosporin is produced by an oxidoreductase that has still to be identified and that catalyzes the stereospecific reduction of the carbonyl moiety of the hexaketide isocoumarin scaffold produced by the non-reducing polyketide synthase aoiG to generate the S-configured secondary alcohol at C-11. The polypeptide is O-methyltransferase aoiF (Aspergillus oryzae (strain ATCC 42149 / RIB 40) (Yellow koji mold)).